Here is a 228-residue protein sequence, read N- to C-terminus: MAAPQDVHVRICNQEIVKFDLEVKALIQDIRDCSGPLSALTELNTKVKEKFQQLRHRIQDLEQLAKEQDKESEKQLLLQEVENHKKQMLSNQASWRKANLTCKIAIDNLEKAELLQGGDLLRQRKTTKESLAQTSSTITESLMGISRMMAQQVQQSEEAMQSLVTSSRTILDANEEFKSMSGTIQLGRKLITKYNRRELTDKLLIFLALALFLATVLYIVKKRLFPFL.

Topologically, residues 1 to 199 (MAAPQDVHVR…LITKYNRREL (199 aa)) are cytoplasmic. Residues 37 to 90 (LSALTELNTKVKEKFQQLRHRIQDLEQLAKEQDKESEKQLLLQEVENHKKQMLS) are a coiled coil. A helical; Anchor for type IV membrane protein transmembrane segment spans residues 200–220 (TDKLLIFLALALFLATVLYIV). The Lumenal segment spans residues 221–228 (KKRLFPFL).

This sequence belongs to the SEC20 family. In terms of assembly, component of a SNARE complex consisting of STX18, USE1L, BNIP1/SEC20L and SEC22B. Interacts directly with STX18, RINT1/TIP20L and NAPA. Interacts with ZW10 through RINT1. Interacts with BCL2. Interacts with RNF186. Interacts with RNF185. Interacts with SQSTM1; increased by 'Lys-63'-linked polyubiquitination of BNIP1. (Microbial infection) Interacts with adenovirus E1B 19K protein; plays a role in the suppression of cell apoptosis by the viral protein. In terms of processing, polyubiquitinated. 'Lys-63'-linked polyubiquitination by RNF185 increases the interaction with the autophagy receptor SQSTM1. Undergoes 'Lys-29'- and 'Lys-63'-linked polyubiquitination by RNF186 that may regulate BNIP1 localization to the mitochondrion. Isoform 1 is highly expressed in heart, brain, liver skeletal muscle and pancreas. Isoform 3 is moderately expressed in placenta, lung and kidney. Isoform 4 is highly expressed in testis and small intestine.

It localises to the endoplasmic reticulum membrane. Its subcellular location is the mitochondrion membrane. In terms of biological role, as part of a SNARE complex may be involved in endoplasmic reticulum membranes fusion and be required for the maintenance of endoplasmic reticulum organization. Also plays a role in apoptosis. It is for instance required for endoplasmic reticulum stress-induced apoptosis. As a substrate of RNF185 interacting with SQSTM1, might also be involved in mitochondrial autophagy. This Homo sapiens (Human) protein is Vesicle transport protein SEC20 (BNIP1).